The following is a 430-amino-acid chain: Enolase (430 aa).

Q163 lines the (2R)-2-phosphoglycerate pocket. Catalysis depends on E205, which acts as the Proton donor. The Mg(2+) site is built by D242, E285, and D312. Positions 337, 366, 367, and 388 each coordinate (2R)-2-phosphoglycerate. The active-site Proton acceptor is K337.

The protein belongs to the enolase family. Mg(2+) serves as cofactor.

Its subcellular location is the cytoplasm. It localises to the secreted. The protein resides in the cell surface. The catalysed reaction is (2R)-2-phosphoglycerate = phosphoenolpyruvate + H2O. It participates in carbohydrate degradation; glycolysis; pyruvate from D-glyceraldehyde 3-phosphate: step 4/5. Its function is as follows. Catalyzes the reversible conversion of 2-phosphoglycerate (2-PG) into phosphoenolpyruvate (PEP). It is essential for the degradation of carbohydrates via glycolysis. The polypeptide is Enolase (Maridesulfovibrio salexigens (strain ATCC 14822 / DSM 2638 / NCIMB 8403 / VKM B-1763) (Desulfovibrio salexigens)).